The sequence spans 283 residues: Diaminopimelate epimerase (283 aa).

2 residues coordinate substrate: Asn13 and Asn67. Residue Cys76 is the Proton donor of the active site. Residues 77-78 (GN), Asn166, Asn199, and 217-218 (ER) each bind substrate. Catalysis depends on Cys226, which acts as the Proton acceptor. 227-228 (GT) contacts substrate.

This sequence belongs to the diaminopimelate epimerase family. Homodimer.

It localises to the cytoplasm. It carries out the reaction (2S,6S)-2,6-diaminopimelate = meso-2,6-diaminopimelate. It participates in amino-acid biosynthesis; L-lysine biosynthesis via DAP pathway; DL-2,6-diaminopimelate from LL-2,6-diaminopimelate: step 1/1. In terms of biological role, catalyzes the stereoinversion of LL-2,6-diaminopimelate (L,L-DAP) to meso-diaminopimelate (meso-DAP), a precursor of L-lysine and an essential component of the bacterial peptidoglycan. This is Diaminopimelate epimerase from Desulforapulum autotrophicum (strain ATCC 43914 / DSM 3382 / VKM B-1955 / HRM2) (Desulfobacterium autotrophicum).